Here is a 69-residue protein sequence, read N- to C-terminus: Large ribosomal subunit protein bL32c (69 aa).

Belongs to the bacterial ribosomal protein bL32 family.

The protein localises to the plastid. Its subcellular location is the chloroplast. In Anthoceros angustus (Hornwort), this protein is Large ribosomal subunit protein bL32c (rpl32).